The sequence spans 271 residues: RELT-like protein 1 (271 aa).

Positions 1 to 23 are cleaved as a signal peptide; sequence MAPRGLPGSAVLAAAVFVGGAVS. Residues 24 to 57 are Extracellular-facing; the sequence is SPLVRSDHSGSHPLPSKTETTPSPTNNNGNGHPE. The tract at residues 27-52 is disordered; the sequence is VRSDHSGSHPLPSKTETTPSPTNNNG. Positions 36 to 52 are enriched in low complexity; that stretch reads PLPSKTETTPSPTNNNG. The chain crosses the membrane as a helical span at residues 58 to 78; it reads YIAYALVPVFFVMGLFGVLIC. Over 79–271 the chain is Cytoplasmic; sequence HLLKKKGYRC…PVKRQQSDSE (193 aa). Phosphoserine is present on residues Ser-109 and Ser-114. 2 disordered regions span residues 144–168 and 231–271; these read CDPESPVTPSTPGSPPVSPGPLSPG and TKVE…SDSE. The span at 155–165 shows a compositional bias: pro residues; the sequence is PGSPPVSPGPL. Residues 231 to 244 show a composition bias toward basic and acidic residues; the sequence is TKVEPKSNQKERRS. A phosphoserine mark is found at Ser-244 and Ser-247.

The protein belongs to the RELT family. In terms of assembly, interacts with RELT, RELL2, OXSR1 and PLSCR1.

The protein resides in the cell membrane. Its function is as follows. Induces activation of MAPK14/p38 cascade, when overexpressed. Induces apoptosis, when overexpressed. The sequence is that of RELT-like protein 1 (RELL1) from Bos taurus (Bovine).